The following is a 120-amino-acid chain: MDGLAIGGVSAPMTAERPQQVKKQLSRRTPDAADGRKPTRMERAKAWTPEIEDQFRLQNSGFKSLDEYVDMYGEPERWPNELGGFISKTQLKSNGYFVYWRKFRECEDKHLAQVKIYYYD.

The tract at residues 1–45 (MDGLAIGGVSAPMTAERPQQVKKQLSRRTPDAADGRKPTRMERAK) is disordered. The segment covering 28–45 (RTPDAADGRKPTRMERAK) has biased composition (basic and acidic residues).

The protein belongs to the MEIG1 family.

The protein is Meiosis expressed gene 1 protein homolog of Oxyrrhis marina (Dinoflagellate).